The sequence spans 377 residues: Fructose-bisphosphate aldolase 1, chloroplastic (377 aa).

The substrate site is built by arginine 74 and lysine 164. Catalysis depends on glutamate 204, which acts as the Proton acceptor. The active-site Schiff-base intermediate with dihydroxyacetone-P is the lysine 246.

The protein belongs to the class I fructose-bisphosphate aldolase family.

The protein resides in the plastid. It localises to the chloroplast. It carries out the reaction beta-D-fructose 1,6-bisphosphate = D-glyceraldehyde 3-phosphate + dihydroxyacetone phosphate. Its pathway is carbohydrate degradation; glycolysis; D-glyceraldehyde 3-phosphate and glycerone phosphate from D-glucose: step 4/4. The sequence is that of Fructose-bisphosphate aldolase 1, chloroplastic (ALDCHL) from Chlamydomonas reinhardtii (Chlamydomonas smithii).